Here is a 361-residue protein sequence, read N- to C-terminus: Chorismate synthase (361 aa).

The NADP(+) site is built by Arg-48 and Arg-54. FMN is bound by residues 125–127 (RSS), 238–239 (NA), Gly-278, 293–297 (KPTSS), and Arg-319.

Belongs to the chorismate synthase family. Homotetramer. The cofactor is FMNH2.

The enzyme catalyses 5-O-(1-carboxyvinyl)-3-phosphoshikimate = chorismate + phosphate. It participates in metabolic intermediate biosynthesis; chorismate biosynthesis; chorismate from D-erythrose 4-phosphate and phosphoenolpyruvate: step 7/7. In terms of biological role, catalyzes the anti-1,4-elimination of the C-3 phosphate and the C-6 proR hydrogen from 5-enolpyruvylshikimate-3-phosphate (EPSP) to yield chorismate, which is the branch point compound that serves as the starting substrate for the three terminal pathways of aromatic amino acid biosynthesis. This reaction introduces a second double bond into the aromatic ring system. This is Chorismate synthase from Shigella flexneri.